Consider the following 236-residue polypeptide: 2,3,4,5-tetrahydropyridine-2,6-dicarboxylate N-acetyltransferase (236 aa).

It belongs to the transferase hexapeptide repeat family. DapH subfamily.

The catalysed reaction is (S)-2,3,4,5-tetrahydrodipicolinate + acetyl-CoA + H2O = L-2-acetamido-6-oxoheptanedioate + CoA. Its pathway is amino-acid biosynthesis; L-lysine biosynthesis via DAP pathway; LL-2,6-diaminopimelate from (S)-tetrahydrodipicolinate (acetylase route): step 1/3. Functionally, catalyzes the transfer of an acetyl group from acetyl-CoA to tetrahydrodipicolinate. In Lactobacillus acidophilus (strain ATCC 700396 / NCK56 / N2 / NCFM), this protein is 2,3,4,5-tetrahydropyridine-2,6-dicarboxylate N-acetyltransferase.